A 660-amino-acid chain; its full sequence is Bifunctional polymyxin resistance protein ArnA (660 aa).

Residues 1 to 304 (MKTVVFAYHD…TLGLVQGSRL (304 aa)) are formyltransferase ArnAFT. 86–88 (HLI) is a binding site for (6R)-10-formyltetrahydrofolate. H104 acts as the Proton donor; for formyltransferase activity in catalysis. (6R)-10-formyltetrahydrofolate-binding positions include R114 and 136–140 (VKRAD). Positions 314–660 (RRTRVLILGV…RTVDLTDKPS (347 aa)) are dehydrogenase ArnADH. NAD(+) is bound by residues D347 and 368 to 369 (DI). UDP-alpha-D-glucuronate is bound by residues A393, Y398, and 432–433 (TS). The Proton acceptor; for decarboxylase activity role is filled by E434. UDP-alpha-D-glucuronate-binding positions include R460, N492, 526-535 (KLIDGGKQKR), and Y613. R619 (proton donor; for decarboxylase activity) is an active-site residue.

In the N-terminal section; belongs to the Fmt family. UDP-L-Ara4N formyltransferase subfamily. The protein in the C-terminal section; belongs to the NAD(P)-dependent epimerase/dehydratase family. UDP-glucuronic acid decarboxylase subfamily. In terms of assembly, homohexamer, formed by a dimer of trimers.

It catalyses the reaction UDP-alpha-D-glucuronate + NAD(+) = UDP-beta-L-threo-pentopyranos-4-ulose + CO2 + NADH. The catalysed reaction is UDP-4-amino-4-deoxy-beta-L-arabinose + (6R)-10-formyltetrahydrofolate = UDP-4-deoxy-4-formamido-beta-L-arabinose + (6S)-5,6,7,8-tetrahydrofolate + H(+). The protein operates within nucleotide-sugar biosynthesis; UDP-4-deoxy-4-formamido-beta-L-arabinose biosynthesis; UDP-4-deoxy-4-formamido-beta-L-arabinose from UDP-alpha-D-glucuronate: step 1/3. It participates in nucleotide-sugar biosynthesis; UDP-4-deoxy-4-formamido-beta-L-arabinose biosynthesis; UDP-4-deoxy-4-formamido-beta-L-arabinose from UDP-alpha-D-glucuronate: step 3/3. It functions in the pathway bacterial outer membrane biogenesis; lipopolysaccharide biosynthesis. Bifunctional enzyme that catalyzes the oxidative decarboxylation of UDP-glucuronic acid (UDP-GlcUA) to UDP-4-keto-arabinose (UDP-Ara4O) and the addition of a formyl group to UDP-4-amino-4-deoxy-L-arabinose (UDP-L-Ara4N) to form UDP-L-4-formamido-arabinose (UDP-L-Ara4FN). The modified arabinose is attached to lipid A and is required for resistance to polymyxin and cationic antimicrobial peptides. This Escherichia coli (strain K12 / MC4100 / BW2952) protein is Bifunctional polymyxin resistance protein ArnA.